The sequence spans 348 residues: 4-hydroxy-2-oxovalerate aldolase 1 (348 aa).

A Pyruvate carboxyltransferase domain is found at 8–260 (ITVHDMTLRD…QTGVDVWAIQ (253 aa)). 16–17 (RD) contacts substrate. Asp-17 contacts Mn(2+). His-20 functions as the Proton acceptor in the catalytic mechanism. The substrate site is built by Ser-170 and His-199. Positions 199 and 201 each coordinate Mn(2+). A substrate-binding site is contributed by Tyr-290.

Belongs to the 4-hydroxy-2-oxovalerate aldolase family.

It catalyses the reaction (S)-4-hydroxy-2-oxopentanoate = acetaldehyde + pyruvate. In Cupriavidus metallidurans (strain ATCC 43123 / DSM 2839 / NBRC 102507 / CH34) (Ralstonia metallidurans), this protein is 4-hydroxy-2-oxovalerate aldolase 1.